Here is an 82-residue protein sequence, read N- to C-terminus: Small ribosomal subunit protein uS17 (82 aa).

The protein belongs to the universal ribosomal protein uS17 family. Part of the 30S ribosomal subunit.

Its function is as follows. One of the primary rRNA binding proteins, it binds specifically to the 5'-end of 16S ribosomal RNA. This chain is Small ribosomal subunit protein uS17, found in Afipia carboxidovorans (strain ATCC 49405 / DSM 1227 / KCTC 32145 / OM5) (Oligotropha carboxidovorans).